Consider the following 358-residue polypeptide: Methylthioribose-1-phosphate isomerase (358 aa).

Residues 54-56 (CGA) and Gln205 each bind substrate. The Proton donor role is filled by Asp246. Position 256–257 (256–257 (NQ)) interacts with substrate.

It belongs to the eIF-2B alpha/beta/delta subunits family. MtnA subfamily.

The enzyme catalyses 5-(methylsulfanyl)-alpha-D-ribose 1-phosphate = 5-(methylsulfanyl)-D-ribulose 1-phosphate. Its pathway is amino-acid biosynthesis; L-methionine biosynthesis via salvage pathway; L-methionine from S-methyl-5-thio-alpha-D-ribose 1-phosphate: step 1/6. In terms of biological role, catalyzes the interconversion of methylthioribose-1-phosphate (MTR-1-P) into methylthioribulose-1-phosphate (MTRu-1-P). This Pseudomonas fluorescens (strain ATCC BAA-477 / NRRL B-23932 / Pf-5) protein is Methylthioribose-1-phosphate isomerase.